Consider the following 126-residue polypeptide: Spermidine export protein MdtJ (126 aa).

4 consecutive transmembrane segments (helical) span residues 1-21 (MMIY…GTLS), 32-52 (TGHI…ALAV), 55-75 (VALG…ITVF), and 82-102 (ESLS…IMLV). Positions 104–126 (SGTRKPKKPNSPNRNSGEHHATA) are disordered.

The protein belongs to the drug/metabolite transporter (DMT) superfamily. Small multidrug resistance (SMR) (TC 2.A.7.1) family. MdtJ subfamily. As to quaternary structure, forms a complex with MdtI.

The protein resides in the cell inner membrane. Its function is as follows. Catalyzes the excretion of spermidine. The protein is Spermidine export protein MdtJ of Yersinia enterocolitica serotype O:8 / biotype 1B (strain NCTC 13174 / 8081).